Here is a 663-residue protein sequence, read N- to C-terminus: Protein LNK2 (663 aa).

Disordered regions lie at residues 528-549 (HYTSDTSHSNKTSQDDQEVIPR) and 590-663 (MEGP…KRKL). A compositionally biased stretch (basic and acidic residues) spans 602–629 (GTEEKGNFPKCSIRETHLTKQKAQKEEG). The span at 639–648 (APNSGSSSTV) shows a compositional bias: polar residues.

In terms of assembly, interacts with CCA1, LHY, REV4 and REV8, but not with PRR7 or PRR9. In terms of tissue distribution, expressed in roots, stems, leaves, seedlings, cotyledons, inflorescences and siliques. Highest expression in root tips, young leaves and vasculatur tissues.

The protein resides in the nucleus. Functionally, transcriptional coactivator necessary for expression of the clock genes PRR5 and TOC1. Antagonizes REV8 function in the regulation of anthocyanin accumulation. Involved in red light input to the clock. Activates clock-controlled genes with afternoon peak. Mediates light inhibition of hypocotyl elongation. Unable to bind to DNA, but recruited to the evening element (EE)-containing region of the PRR5 and TOC1 promoters through its interaction with the DNA binding proteins REV8 and REV4. The polypeptide is Protein LNK2 (Arabidopsis thaliana (Mouse-ear cress)).